A 172-amino-acid chain; its full sequence is Translationally-controlled tumor protein homolog (172 aa).

The region spanning 1-172 (MIIYRDCISQ…FKDGLEMEKC (172 aa)) is the TCTP domain.

It belongs to the TCTP family. As to expression, expressed by the venom gland.

The protein resides in the secreted. In terms of biological role, venom protein that causes edema, enhances vascular permeability and is likely related to the inflammatory activity of the venom. The polypeptide is Translationally-controlled tumor protein homolog (Crotalus adamanteus (Eastern diamondback rattlesnake)).